Consider the following 626-residue polypeptide: UvrABC system protein C (626 aa).

The GIY-YIG domain occupies 20–97; sequence ECSGVYKMLD…IKKFQPKFNI (78 aa). A UVR domain is found at 207-242; that stretch reads IALQANLSKKMQELSSQMRFEEAAEIRDRIKALSYV.

It belongs to the UvrC family. As to quaternary structure, interacts with UvrB in an incision complex.

The protein localises to the cytoplasm. Functionally, the UvrABC repair system catalyzes the recognition and processing of DNA lesions. UvrC both incises the 5' and 3' sides of the lesion. The N-terminal half is responsible for the 3' incision and the C-terminal half is responsible for the 5' incision. In Rickettsia prowazekii (strain Madrid E), this protein is UvrABC system protein C.